Consider the following 89-residue polypeptide: Small ribosomal subunit protein uS19 (89 aa).

Belongs to the universal ribosomal protein uS19 family.

Functionally, protein S19 forms a complex with S13 that binds strongly to the 16S ribosomal RNA. In Xanthomonas campestris pv. campestris (strain 8004), this protein is Small ribosomal subunit protein uS19.